A 209-amino-acid chain; its full sequence is Putative 3-methyladenine DNA glycosylase (209 aa).

Residues 189-209 (YISKTQPGPPPKKRKKGLESS) are disordered. Positions 199 to 209 (PKKRKKGLESS) are enriched in basic residues.

The protein belongs to the DNA glycosylase MPG family.

The chain is Putative 3-methyladenine DNA glycosylase from Chlorobaculum tepidum (strain ATCC 49652 / DSM 12025 / NBRC 103806 / TLS) (Chlorobium tepidum).